The primary structure comprises 130 residues: Small ribosomal subunit protein uS8 (130 aa).

Belongs to the universal ribosomal protein uS8 family. In terms of assembly, part of the 30S ribosomal subunit. Contacts proteins S5 and S12.

Functionally, one of the primary rRNA binding proteins, it binds directly to 16S rRNA central domain where it helps coordinate assembly of the platform of the 30S subunit. In Vibrio vulnificus (strain CMCP6), this protein is Small ribosomal subunit protein uS8.